The chain runs to 112 residues: uncharacterized protein (112 aa).

It localises to the plastid. It is found in the chloroplast. This is an uncharacterized protein from Chlamydomonas reinhardtii (Chlamydomonas smithii).